Consider the following 71-residue polypeptide: NAD(P)H-quinone oxidoreductase subunit O (71 aa).

This sequence belongs to the complex I NdhO subunit family. In terms of assembly, NDH-1 can be composed of about 15 different subunits; different subcomplexes with different compositions have been identified which probably have different functions.

It is found in the cellular thylakoid membrane. The catalysed reaction is a plastoquinone + NADH + (n+1) H(+)(in) = a plastoquinol + NAD(+) + n H(+)(out). It carries out the reaction a plastoquinone + NADPH + (n+1) H(+)(in) = a plastoquinol + NADP(+) + n H(+)(out). NDH-1 shuttles electrons from an unknown electron donor, via FMN and iron-sulfur (Fe-S) centers, to quinones in the respiratory and/or the photosynthetic chain. The immediate electron acceptor for the enzyme in this species is believed to be plastoquinone. Couples the redox reaction to proton translocation, and thus conserves the redox energy in a proton gradient. Cyanobacterial NDH-1 also plays a role in inorganic carbon-concentration. The sequence is that of NAD(P)H-quinone oxidoreductase subunit O from Nostoc punctiforme (strain ATCC 29133 / PCC 73102).